Here is a 329-residue protein sequence, read N- to C-terminus: Dapdiamide synthesis protein DdaC (329 aa).

It depends on Fe(2+) as a cofactor.

It participates in antibiotic biosynthesis. Its function is as follows. Involved in dapdiamide antibiotics biosynthesis. Catalyzes the alpha-ketoglutarate-dependent epoxidation of the covalently bound N-beta-fumaramoyl-DAP-S-DdaD to generate N-beta-epoxysuccinamoyl-DAP in thioester linkage to DdaD. The protein is Dapdiamide synthesis protein DdaC of Enterobacter agglomerans (Erwinia herbicola).